We begin with the raw amino-acid sequence, 69 residues long: Large ribosomal subunit protein uL29 (69 aa).

It belongs to the universal ribosomal protein uL29 family.

The chain is Large ribosomal subunit protein uL29 from Synechococcus sp. (strain WH7803).